A 294-amino-acid chain; its full sequence is 4-hydroxy-tetrahydrodipicolinate synthase (294 aa).

Position 45 (Thr-45) interacts with pyruvate. The Proton donor/acceptor role is filled by Tyr-133. Lys-161 acts as the Schiff-base intermediate with substrate in catalysis. Residue Ile-203 coordinates pyruvate.

It belongs to the DapA family. As to quaternary structure, homotetramer; dimer of dimers.

The protein resides in the cytoplasm. It catalyses the reaction L-aspartate 4-semialdehyde + pyruvate = (2S,4S)-4-hydroxy-2,3,4,5-tetrahydrodipicolinate + H2O + H(+). It functions in the pathway amino-acid biosynthesis; L-lysine biosynthesis via DAP pathway; (S)-tetrahydrodipicolinate from L-aspartate: step 3/4. Catalyzes the condensation of (S)-aspartate-beta-semialdehyde [(S)-ASA] and pyruvate to 4-hydroxy-tetrahydrodipicolinate (HTPA). The protein is 4-hydroxy-tetrahydrodipicolinate synthase of Buchnera aphidicola subsp. Acyrthosiphon pisum (strain 5A).